The primary structure comprises 610 residues: Elongation factor 4 (610 aa).

One can recognise a tr-type G domain in the interval 12 to 194 (EKIRNFSIIA…QIVEKVPAPQ (183 aa)). Residues 24–29 (DHGKST) and 141–144 (NKID) each bind GTP.

Belongs to the TRAFAC class translation factor GTPase superfamily. Classic translation factor GTPase family. LepA subfamily.

Its subcellular location is the cell membrane. The enzyme catalyses GTP + H2O = GDP + phosphate + H(+). Required for accurate and efficient protein synthesis under certain stress conditions. May act as a fidelity factor of the translation reaction, by catalyzing a one-codon backward translocation of tRNAs on improperly translocated ribosomes. Back-translocation proceeds from a post-translocation (POST) complex to a pre-translocation (PRE) complex, thus giving elongation factor G a second chance to translocate the tRNAs correctly. Binds to ribosomes in a GTP-dependent manner. This Streptococcus thermophilus (strain CNRZ 1066) protein is Elongation factor 4.